The primary structure comprises 1465 residues: Transcriptional elongation regulator MINIYO (1465 aa).

Disordered stretches follow at residues 27–85 (KGIS…AEER), 186–211 (LNASPPLAVSNGLGTRHASSSLESDI), and 1113–1135 (TIHEDGEMSNSSTQDKKSDSSTI).

Belongs to the RPAP1 family. As to quaternary structure, interacts with HAG3, NRPB3 and NRPB10L. As to expression, expressed in root and shoot apices and in leaf and flower primordia. Detected in the endosperm, embryo, meristems and in organ primordia, but not in mature cells. Found exclusively in the vascular bundles in mature leaves.

The protein localises to the cytoplasm. The protein resides in the nucleus. In terms of biological role, positive regulator of transcriptional elongation that is essential for cells to initiate differentiation. Interacts with RNA polymerase II and the Elongator complex and is required to sustain global levels of transcriptional elongation activity, specifically in differentiating tissues. The polypeptide is Transcriptional elongation regulator MINIYO (Arabidopsis thaliana (Mouse-ear cress)).